Reading from the N-terminus, the 506-residue chain is NAD(P)H-quinone oxidoreductase chain 4, chloroplastic (506 aa).

Helical transmembrane passes span 5–25 (FPLL…IPFL), 35–55 (WYTL…FIYK), 88–108 (MPLI…AWPI), 114–134 (LFYF…LSQD), 135–155 (ILLF…LLSL), 168–188 (FILY…TMAF), 209–229 (ALEI…LPAF), 243–263 (HYST…YGLI), 275–295 (VIFS…GALT), 309–329 (SSIS…DLGL), 331–351 (GAMM…FLAG), 386–406 (SLAL…LGFL), 415–435 (FIAL…IYLL), and 463–483 (IFIM…PNLT).

The protein belongs to the complex I subunit 4 family.

Its subcellular location is the plastid. The protein localises to the chloroplast thylakoid membrane. It carries out the reaction a plastoquinone + NADH + (n+1) H(+)(in) = a plastoquinol + NAD(+) + n H(+)(out). It catalyses the reaction a plastoquinone + NADPH + (n+1) H(+)(in) = a plastoquinol + NADP(+) + n H(+)(out). The protein is NAD(P)H-quinone oxidoreductase chain 4, chloroplastic of Chaetosphaeridium globosum (Charophycean green alga).